We begin with the raw amino-acid sequence, 316 residues long: DNA-directed RNA polymerase subunit alpha (316 aa).

Positions 1-230 are alpha N-terminal domain (alpha-NTD); sequence MIEFEKPNIH…EHLAMFVDLT (230 aa). The alpha C-terminal domain (alpha-CTD) stretch occupies residues 247 to 316; the sequence is KEKMLEMTIE…DLGLSLRKED (70 aa).

This sequence belongs to the RNA polymerase alpha chain family. As to quaternary structure, homodimer. The RNAP catalytic core consists of 2 alpha, 1 beta, 1 beta' and 1 omega subunit. When a sigma factor is associated with the core the holoenzyme is formed, which can initiate transcription.

It carries out the reaction RNA(n) + a ribonucleoside 5'-triphosphate = RNA(n+1) + diphosphate. DNA-dependent RNA polymerase catalyzes the transcription of DNA into RNA using the four ribonucleoside triphosphates as substrates. This is DNA-directed RNA polymerase subunit alpha from Levilactobacillus brevis (strain ATCC 367 / BCRC 12310 / CIP 105137 / JCM 1170 / LMG 11437 / NCIMB 947 / NCTC 947) (Lactobacillus brevis).